We begin with the raw amino-acid sequence, 160 residues long: Cytochrome b6-f complex subunit 4 (160 aa).

The next 3 membrane-spanning stretches (helical) occupy residues 36-56, 95-115, and 131-151; these read LLYI…GLAI, LLGV…PFLE, and TVFL…TLPI.

Belongs to the cytochrome b family. PetD subfamily. In terms of assembly, the 4 large subunits of the cytochrome b6-f complex are cytochrome b6, subunit IV (17 kDa polypeptide, petD), cytochrome f and the Rieske protein, while the 4 small subunits are petG, petL, petM and petN. The complex functions as a dimer.

It localises to the plastid. The protein resides in the chloroplast thylakoid membrane. Component of the cytochrome b6-f complex, which mediates electron transfer between photosystem II (PSII) and photosystem I (PSI), cyclic electron flow around PSI, and state transitions. This Oenothera elata subsp. hookeri (Hooker's evening primrose) protein is Cytochrome b6-f complex subunit 4.